The primary structure comprises 177 residues: ATP synthase subunit delta (177 aa).

It belongs to the ATPase delta chain family. As to quaternary structure, F-type ATPases have 2 components, F(1) - the catalytic core - and F(0) - the membrane proton channel. F(1) has five subunits: alpha(3), beta(3), gamma(1), delta(1), epsilon(1). F(0) has three main subunits: a(1), b(2) and c(10-14). The alpha and beta chains form an alternating ring which encloses part of the gamma chain. F(1) is attached to F(0) by a central stalk formed by the gamma and epsilon chains, while a peripheral stalk is formed by the delta and b chains.

The protein resides in the cell inner membrane. Its function is as follows. F(1)F(0) ATP synthase produces ATP from ADP in the presence of a proton or sodium gradient. F-type ATPases consist of two structural domains, F(1) containing the extramembraneous catalytic core and F(0) containing the membrane proton channel, linked together by a central stalk and a peripheral stalk. During catalysis, ATP synthesis in the catalytic domain of F(1) is coupled via a rotary mechanism of the central stalk subunits to proton translocation. Functionally, this protein is part of the stalk that links CF(0) to CF(1). It either transmits conformational changes from CF(0) to CF(1) or is implicated in proton conduction. The protein is ATP synthase subunit delta of Vibrio parahaemolyticus serotype O3:K6 (strain RIMD 2210633).